The following is a 361-amino-acid chain: tRNA/tmRNA (uracil-C(5))-methyltransferase (361 aa).

5 residues coordinate S-adenosyl-L-methionine: Gln183, Tyr211, Asn216, Glu232, and Asp294. Cys319 functions as the Nucleophile in the catalytic mechanism. Glu353 acts as the Proton acceptor in catalysis.

The protein belongs to the class I-like SAM-binding methyltransferase superfamily. RNA M5U methyltransferase family. TrmA subfamily.

The catalysed reaction is uridine(54) in tRNA + S-adenosyl-L-methionine = 5-methyluridine(54) in tRNA + S-adenosyl-L-homocysteine + H(+). It catalyses the reaction uridine(341) in tmRNA + S-adenosyl-L-methionine = 5-methyluridine(341) in tmRNA + S-adenosyl-L-homocysteine + H(+). Dual-specificity methyltransferase that catalyzes the formation of 5-methyluridine at position 54 (m5U54) in all tRNAs, and that of position 341 (m5U341) in tmRNA (transfer-mRNA). This is tRNA/tmRNA (uracil-C(5))-methyltransferase from Acinetobacter baumannii (strain AB307-0294).